The sequence spans 566 residues: Membrane protein insertase YidC (566 aa).

Transmembrane regions (helical) follow at residues 3 to 23, 346 to 366, 369 to 389, 436 to 456, and 509 to 529; these read IKRI…FNAW, GWLW…HAVV, WGWS…WFSA, GGCL…YVII, and MWIL…GLVL.

Belongs to the OXA1/ALB3/YidC family. Type 1 subfamily. Interacts with the Sec translocase complex via SecD. Specifically interacts with transmembrane segments of nascent integral membrane proteins during membrane integration.

Its subcellular location is the cell inner membrane. Its function is as follows. Required for the insertion and/or proper folding and/or complex formation of integral membrane proteins into the membrane. Involved in integration of membrane proteins that insert both dependently and independently of the Sec translocase complex, as well as at least some lipoproteins. Aids folding of multispanning membrane proteins. The sequence is that of Membrane protein insertase YidC from Coxiella burnetii (strain RSA 331 / Henzerling II).